The sequence spans 411 residues: Citrate synthase (411 aa).

Active-site residues include histidine 304 and aspartate 363.

This sequence belongs to the citrate synthase family.

It carries out the reaction oxaloacetate + acetyl-CoA + H2O = citrate + CoA + H(+). Its pathway is carbohydrate metabolism; tricarboxylic acid cycle; isocitrate from oxaloacetate: step 1/2. The polypeptide is Citrate synthase (gltA) (Rickettsia canadensis).